The primary structure comprises 205 residues: Outer-membrane lipoprotein carrier protein (205 aa).

The first 19 residues, 1–19 (MKKIIICFIFVFSINVSFA), serve as a signal peptide directing secretion.

The protein belongs to the LolA family. In terms of assembly, monomer.

It localises to the periplasm. In terms of biological role, participates in the translocation of lipoproteins from the inner membrane to the outer membrane. Only forms a complex with a lipoprotein if the residue after the N-terminal Cys is not an aspartate (The Asp acts as a targeting signal to indicate that the lipoprotein should stay in the inner membrane). The protein is Outer-membrane lipoprotein carrier protein of Francisella tularensis subsp. tularensis (strain FSC 198).